Reading from the N-terminus, the 652-residue chain is Regulator of DNA class I crossover intermediates 1 (652 aa).

The segment at residues 1-228 (MNWVGGSRSR…APYKRTNSSE (228 aa)) is a DNA-binding region (binds DNA containing a D-loop). 2 disordered regions span residues 464–512 (YLES…KATE) and 621–652 (EKESSHPEAGSCTEDRTADTTGGQETPTSNSL). Residues 467–477 (SSQSSQSASYS) are compositionally biased toward low complexity. 2 stretches are compositionally biased toward polar residues: residues 478–491 (PRPTESTFSSSTDL) and 639–652 (DTTGGQETPTSNSL).

Interacts with MSH5. Interacts with TEX11. In terms of tissue distribution, expressed mainly in testis (at protein level). Expressed in spermatogonia and enriched in spermatocytes; absent in testicular somatic cells (at protein level). No expression or low levels in other tissues.

The protein resides in the chromosome. Its function is as follows. Involved in recombination, probably acting by stabilizing recombination intermediates during meiotic crossover formation. Required for normal germline development and fertility. Required for meiotic progression, complete chromosomal synapsis and crossover formation. Binds double-stranded DNA. However, also binds branched DNA molecules, such as those containing a D-loop or Holliday junction structure. Probably not required for formation of DNA double-strand breaks (DSBs). Also binds RNA in an RNA structure-independent manner, with a preference for binding 3'-UTR regions of mRNAs; may stabilize bound RNAs. The chain is Regulator of DNA class I crossover intermediates 1 from Mus musculus (Mouse).